A 195-amino-acid chain; its full sequence is Ureidoglycolate lyase (195 aa).

Belongs to the ureidoglycolate lyase family. Homodimer.

It catalyses the reaction (S)-ureidoglycolate = urea + glyoxylate. The protein operates within nitrogen metabolism; (S)-allantoin degradation. Catalyzes the catabolism of the allantoin degradation intermediate (S)-ureidoglycolate, generating urea and glyoxylate. Involved in the utilization of allantoin as secondary nitrogen source when primary sources are limiting. This chain is Ureidoglycolate lyase (DAL3), found in Saccharomyces cerevisiae (strain ATCC 204508 / S288c) (Baker's yeast).